Consider the following 122-residue polypeptide: Large ribosomal subunit protein bL12 (122 aa).

Belongs to the bacterial ribosomal protein bL12 family. In terms of assembly, homodimer. Part of the ribosomal stalk of the 50S ribosomal subunit. Forms a multimeric L10(L12)X complex, where L10 forms an elongated spine to which 2 to 4 L12 dimers bind in a sequential fashion. Binds GTP-bound translation factors.

Functionally, forms part of the ribosomal stalk which helps the ribosome interact with GTP-bound translation factors. Is thus essential for accurate translation. In Staphylococcus aureus (strain Mu50 / ATCC 700699), this protein is Large ribosomal subunit protein bL12.